The following is a 395-amino-acid chain: Phosphoprotein (395 aa).

2 disordered regions span residues 31–109 (VETV…DTQL) and 126–214 (NKSS…PASV). Residues 65 to 74 (TPDRQNRSDK) are compositionally biased toward basic and acidic residues. 3 stretches are compositionally biased toward polar residues: residues 75 to 98 (QPST…QPPT), 146 to 168 (LPTQ…QNRA), and 203 to 212 (SGQSQDNTPA). The tract at residues 222-285 (DFVQAMMSMM…LGMMKILDPG (64 aa)) is multimerization.

The protein belongs to the rubulavirus/avulavirus P protein family. In terms of assembly, homotetramer. Interacts (via multimerization domain) with polymerase L; this interaction forms the polymerase L-P complex. Interacts (via N-terminus) with N0 (via Ncore); this interaction allows P to chaperon N0 to avoid N polymerization before encapsidation. Interacts (via C-terminus) with N-RNA template; this interaction positions the polymerase on the template for both transcription and replication.

Its function is as follows. Essential cofactor of the RNA polymerase L that plays a central role in the transcription and replication by forming the polymerase complex with RNA polymerase L and recruiting L to the genomic N-RNA template for RNA synthesis. Also plays a central role in the encapsidation of nascent RNA chains by forming the encapsidation complex with the nucleocapsid protein N (N-P complex). Acts as a chaperone for newly synthesized free N protein, so-called N0, allowing encapsidation of nascent RNA chains during replication. The nucleoprotein protein N prevents excessive phosphorylation of P, which leads to down-regulation of viral transcription/ replication. Participates, together with N, in the formation of viral factories (viroplasms), which are large inclusions in the host cytoplasm where replication takes place. The protein is Phosphoprotein (P/C) of Gallus gallus (Chicken).